The sequence spans 645 residues: MGKIKELETSLANKIAAGEVVERPSSVVKELLENAIDAQATEINIEVEQSGVSSIRVVDNGTGIAQEDLGLVFHRHATSKIVADDDLFHIRTLGFRGEALASISSVAKVTLKTCTDNENGHEIYAENGKIIHQKPAKAKKGTDIQVDSLFYNTPARLKYIKSLYTELGKITDIVNRMAMSHPEIRISLVSDGKKLLSTNGSGRTNEVMAEIYGMKVAKDLVHISGDTSDYHLEGFVAKPEHSRSNKHYISIFINGRYIKNFVLNKAILEGYHTLLTIGRFPICYINIQMDPILVDVNVHPTKLEVRLSKEDQLYDLIVTKIREAFKDKILIPQNDLNHASKKNKVLETFEQQKINFEKQQSQIGETSAPYVHDQKDKNHDVESHKNNLDSTSSTNNESTEVSNELHNHIDDSYLQSQKEVLFDMEQNTSNEYEISNQQSNDIKGTVSQTPHRRVPYMEIVGQVHGTYIIAQNENGMFMIDQHAAQERIKYEYFREKIGEVTNEVQNLLIPLTFHFSKDEQMIIDQYKDELDKVGVHLEHFGGHDYIVNSYPVWFPKEEAEEIIKDMIELVLKHKSVDVKKIREDAAIMMSCKKSIKANHYLKNNEMADLIDQLREAEDPFTCPHGRPIIINFSNYELEKLFKRVM.

The segment at 371 to 403 (VHDQKDKNHDVESHKNNLDSTSSTNNESTEVSN) is disordered. The segment covering 372 to 387 (HDQKDKNHDVESHKNN) has biased composition (basic and acidic residues). Low complexity predominate over residues 390–402 (STSSTNNESTEVS).

The protein belongs to the DNA mismatch repair MutL/HexB family.

This protein is involved in the repair of mismatches in DNA. It is required for dam-dependent methyl-directed DNA mismatch repair. May act as a 'molecular matchmaker', a protein that promotes the formation of a stable complex between two or more DNA-binding proteins in an ATP-dependent manner without itself being part of a final effector complex. This Staphylococcus epidermidis (strain ATCC 35984 / DSM 28319 / BCRC 17069 / CCUG 31568 / BM 3577 / RP62A) protein is DNA mismatch repair protein MutL.